Consider the following 133-residue polypeptide: Protein PROTON GRADIENT REGULATION 5, chloroplastic (133 aa).

The transit peptide at 1–60 (MAAASISAIGCNQTLIGTSFYGGWGSSISGEDYQTMLSKTVAPPQQARVSRKAIRAVPMM) directs the protein to the chloroplast.

Belongs to the PGR5 family. Interacts with PGRL1A and PGRL1B. Post-translationally, disulfide bonds; Cys-11 and Cys-105 are probably involved in the formation of disulfide bridges with 'Cys-300' and 'Cys-303' of PGRL1A. 'Cys-272' and 'Cys-275' of PGRL1A may also be used to form the disulfide bridges, but in this case the cyclic electron flow is lost.

It is found in the plastid. It localises to the chloroplast thylakoid membrane. Its function is as follows. Critical for growth under fluctuating-light conditions. Involved in the regulation of the cyclic electron flow (CEF) around Photosystem I. Essential for the reduction of PGRL1A by ferredoxin and for photoprotection. Contributes to maximize photosynthesis efficiency after a long dark adaptation via the regulation of non-photochemical quenching (NPQ); acts independently from DLDG1. Promotes the induction of steady-state proton motive force (pmf) and energy-dependent quenching (qE). The polypeptide is Protein PROTON GRADIENT REGULATION 5, chloroplastic (Arabidopsis thaliana (Mouse-ear cress)).